The chain runs to 261 residues: Thiazole synthase (261 aa).

The active-site Schiff-base intermediate with DXP is Lys102. Residues Gly163, 189-190, and 211-212 contribute to the 1-deoxy-D-xylulose 5-phosphate site; these read AG and NT.

The protein belongs to the ThiG family. Homotetramer. Forms heterodimers with either ThiH or ThiS.

Its subcellular location is the cytoplasm. The enzyme catalyses [ThiS sulfur-carrier protein]-C-terminal-Gly-aminoethanethioate + 2-iminoacetate + 1-deoxy-D-xylulose 5-phosphate = [ThiS sulfur-carrier protein]-C-terminal Gly-Gly + 2-[(2R,5Z)-2-carboxy-4-methylthiazol-5(2H)-ylidene]ethyl phosphate + 2 H2O + H(+). Its pathway is cofactor biosynthesis; thiamine diphosphate biosynthesis. Its function is as follows. Catalyzes the rearrangement of 1-deoxy-D-xylulose 5-phosphate (DXP) to produce the thiazole phosphate moiety of thiamine. Sulfur is provided by the thiocarboxylate moiety of the carrier protein ThiS. In vitro, sulfur can be provided by H(2)S. This Acinetobacter baylyi (strain ATCC 33305 / BD413 / ADP1) protein is Thiazole synthase.